The following is a 326-amino-acid chain: MSALIRHDWDLAEIEALLELPLVDLLWHAQQVHRDAHPAGYHVQLASLLSVKTGGCEEDCAYCPQSMHHSSDVTAQPELQLQVDGVLQQARSARDAGAHRFCMGWAWREIREGAPFDAMLAMVRGVRELGMEACVTAGMLTDSQAERLAQAGLTSYNHNLDTSPEHYDQIISTRTYQERLDTLQRARDAGLSLCCGGIIGMGESRRDRASLLQVLAGLNPHPESVPINGLVAVEGTPLEDQEPWEPLELVRMVAVARILMPEARVRLSAGRERLSQEAQILCLLAGADSIFYGDSLLTTSNPAVQADQALLAAAGVSSSLEGVAAA.

Residues 41–271 (YHVQLASLLS…EARVRLSAGR (231 aa)) enclose the Radical SAM core domain. [4Fe-4S] cluster contacts are provided by C56, C60, and C63. [2Fe-2S] cluster contacts are provided by C102, C134, C194, and R266.

Belongs to the radical SAM superfamily. Biotin synthase family. Homodimer. [4Fe-4S] cluster serves as cofactor. [2Fe-2S] cluster is required as a cofactor.

It catalyses the reaction (4R,5S)-dethiobiotin + (sulfur carrier)-SH + 2 reduced [2Fe-2S]-[ferredoxin] + 2 S-adenosyl-L-methionine = (sulfur carrier)-H + biotin + 2 5'-deoxyadenosine + 2 L-methionine + 2 oxidized [2Fe-2S]-[ferredoxin]. Its pathway is cofactor biosynthesis; biotin biosynthesis; biotin from 7,8-diaminononanoate: step 2/2. Its function is as follows. Catalyzes the conversion of dethiobiotin (DTB) to biotin by the insertion of a sulfur atom into dethiobiotin via a radical-based mechanism. The protein is Biotin synthase of Synechococcus sp. (strain RCC307).